A 194-amino-acid polypeptide reads, in one-letter code: NAD(P)H-quinone oxidoreductase subunit I (194 aa).

4Fe-4S ferredoxin-type domains lie at 55 to 84 (GRIH…VDWE) and 95 to 124 (NHYS…MTEE). 8 residues coordinate [4Fe-4S] cluster: Cys-64, Cys-67, Cys-70, Cys-74, Cys-104, Cys-107, Cys-110, and Cys-114. The interval 173-194 (DLPAGSRRAGLRPEEIVEQSQQ) is disordered.

Belongs to the complex I 23 kDa subunit family. As to quaternary structure, NDH-1 is composed of at least 11 different subunits. [4Fe-4S] cluster serves as cofactor.

The protein resides in the cellular thylakoid membrane. It carries out the reaction a plastoquinone + NADH + (n+1) H(+)(in) = a plastoquinol + NAD(+) + n H(+)(out). The catalysed reaction is a plastoquinone + NADPH + (n+1) H(+)(in) = a plastoquinol + NADP(+) + n H(+)(out). Functionally, NDH-1 shuttles electrons from an unknown electron donor, via FMN and iron-sulfur (Fe-S) centers, to quinones in the respiratory and/or the photosynthetic chain. The immediate electron acceptor for the enzyme in this species is believed to be plastoquinone. Couples the redox reaction to proton translocation, and thus conserves the redox energy in a proton gradient. In Leptolyngbya boryana (Plectonema boryanum), this protein is NAD(P)H-quinone oxidoreductase subunit I (ndhI).